Reading from the N-terminus, the 351-residue chain is Beta-hexosaminidase (351 aa).

Residues Asp62, Arg70, Arg134, and 164 to 165 each bind substrate; that span reads KH. Catalysis depends on His177, which acts as the Proton donor/acceptor. The Nucleophile role is filled by Asp249.

This sequence belongs to the glycosyl hydrolase 3 family. NagZ subfamily.

The protein resides in the cytoplasm. It carries out the reaction Hydrolysis of terminal non-reducing N-acetyl-D-hexosamine residues in N-acetyl-beta-D-hexosaminides.. Its pathway is cell wall biogenesis; peptidoglycan recycling. Plays a role in peptidoglycan recycling by cleaving the terminal beta-1,4-linked N-acetylglucosamine (GlcNAc) from peptide-linked peptidoglycan fragments, giving rise to free GlcNAc, anhydro-N-acetylmuramic acid and anhydro-N-acetylmuramic acid-linked peptides. The polypeptide is Beta-hexosaminidase (Histophilus somni (strain 129Pt) (Haemophilus somnus)).